A 504-amino-acid polypeptide reads, in one-letter code: ATP synthase subunit alpha, chloroplastic (504 aa).

170–177 (GDRQTGKT) provides a ligand contact to ATP.

The protein belongs to the ATPase alpha/beta chains family. F-type ATPases have 2 components, CF(1) - the catalytic core - and CF(0) - the membrane proton channel. CF(1) has five subunits: alpha(3), beta(3), gamma(1), delta(1), epsilon(1). CF(0) has four main subunits: a, b, b' and c.

The protein localises to the plastid. It localises to the chloroplast thylakoid membrane. The catalysed reaction is ATP + H2O + 4 H(+)(in) = ADP + phosphate + 5 H(+)(out). In terms of biological role, produces ATP from ADP in the presence of a proton gradient across the membrane. The alpha chain is a regulatory subunit. In Cyanidium caldarium (Red alga), this protein is ATP synthase subunit alpha, chloroplastic.